The sequence spans 172 residues: Small ribosomal subunit protein uS5 (172 aa).

The region spanning 17 to 80 (LREKMIAVNR…DEARRKMIKV (64 aa)) is the S5 DRBM domain.

The protein belongs to the universal ribosomal protein uS5 family. In terms of assembly, part of the 30S ribosomal subunit. Contacts proteins S4 and S8.

Functionally, with S4 and S12 plays an important role in translational accuracy. In terms of biological role, located at the back of the 30S subunit body where it stabilizes the conformation of the head with respect to the body. The protein is Small ribosomal subunit protein uS5 of Polynucleobacter asymbioticus (strain DSM 18221 / CIP 109841 / QLW-P1DMWA-1) (Polynucleobacter necessarius subsp. asymbioticus).